A 202-amino-acid polypeptide reads, in one-letter code: uncharacterized protein (202 aa).

This is an uncharacterized protein from Bacillus anthracis.